Consider the following 642-residue polypeptide: Threonine--tRNA ligase (642 aa).

The 63-residue stretch at 1–63 (MSTVTVTLPD…TADVELEIVT (63 aa)) folds into the TGS domain. The catalytic stretch occupies residues 242–533 (DHRKIGQEMD…LTEHYNGKFP (292 aa)). Positions 334, 385, and 510 each coordinate Zn(2+).

The protein belongs to the class-II aminoacyl-tRNA synthetase family. In terms of assembly, homodimer. Zn(2+) serves as cofactor.

It is found in the cytoplasm. It catalyses the reaction tRNA(Thr) + L-threonine + ATP = L-threonyl-tRNA(Thr) + AMP + diphosphate + H(+). Its function is as follows. Catalyzes the attachment of threonine to tRNA(Thr) in a two-step reaction: L-threonine is first activated by ATP to form Thr-AMP and then transferred to the acceptor end of tRNA(Thr). This Haloarcula marismortui (strain ATCC 43049 / DSM 3752 / JCM 8966 / VKM B-1809) (Halobacterium marismortui) protein is Threonine--tRNA ligase.